The chain runs to 228 residues: Phosphoglycolate phosphatase (228 aa).

The active-site Nucleophile is Asp12. Positions 12, 14, and 177 each coordinate Mg(2+).

Belongs to the HAD-like hydrolase superfamily. CbbY/CbbZ/Gph/YieH family. Mg(2+) serves as cofactor.

The enzyme catalyses 2-phosphoglycolate + H2O = glycolate + phosphate. The protein operates within organic acid metabolism; glycolate biosynthesis; glycolate from 2-phosphoglycolate: step 1/1. Its function is as follows. Specifically catalyzes the dephosphorylation of 2-phosphoglycolate. Is involved in the dissimilation of the intracellular 2-phosphoglycolate formed during the DNA repair of 3'-phosphoglycolate ends, a major class of DNA lesions induced by oxidative stress. The protein is Phosphoglycolate phosphatase of Vibrio vulnificus (strain CMCP6).